The chain runs to 178 residues: MLEGIVRESIGRKAAKALKRDGYLIANIYGKGLENINAAFKINEFIKEVRKKTTLAFDVKVGGKVLNVVVVDYQKDPVTAELKHVDLKVAQKGVISKYMVPVKIVGTAMGLKNKGVLIQSKRRLKVKCAAENLPNYFELDVTKLDVGDALLVRDVVVPEGVTMVDADRVAVVGVEKAR.

It belongs to the bacterial ribosomal protein bL25 family. CTC subfamily. In terms of assembly, part of the 50S ribosomal subunit; part of the 5S rRNA/L5/L18/L25 subcomplex. Contacts the 5S rRNA. Binds to the 5S rRNA independently of L5 and L18.

In terms of biological role, this is one of the proteins that binds to the 5S RNA in the ribosome where it forms part of the central protuberance. The protein is Large ribosomal subunit protein bL25 of Campylobacter lari (strain RM2100 / D67 / ATCC BAA-1060).